The following is a 417-amino-acid chain: Ribulose bisphosphate carboxylase large chain (417 aa).

Substrate-binding residues include N103 and T153. The Proton acceptor role is filled by K155. A substrate-binding site is contributed by K157. K181, D183, and E184 together coordinate Mg(2+). K181 bears the N6-carboxylysine mark. The active-site Proton acceptor is the H274. R275, H307, and S359 together coordinate substrate.

The protein belongs to the RuBisCO large chain family. Type I subfamily. In terms of assembly, heterohexadecamer of 8 large chains and 8 small chains. It depends on Mg(2+) as a cofactor.

The protein resides in the plastid. It is found in the chloroplast. It carries out the reaction 2 (2R)-3-phosphoglycerate + 2 H(+) = D-ribulose 1,5-bisphosphate + CO2 + H2O. It catalyses the reaction D-ribulose 1,5-bisphosphate + O2 = 2-phosphoglycolate + (2R)-3-phosphoglycerate + 2 H(+). RuBisCO catalyzes two reactions: the carboxylation of D-ribulose 1,5-bisphosphate, the primary event in carbon dioxide fixation, as well as the oxidative fragmentation of the pentose substrate in the photorespiration process. Both reactions occur simultaneously and in competition at the same active site. The sequence is that of Ribulose bisphosphate carboxylase large chain from Acrostichum aureum (Golden leather fern).